The chain runs to 94 residues: Co-chaperonin GroES (94 aa).

Belongs to the GroES chaperonin family. In terms of assembly, heptamer of 7 subunits arranged in a ring. Interacts with the chaperonin GroEL.

The protein localises to the cytoplasm. In terms of biological role, together with the chaperonin GroEL, plays an essential role in assisting protein folding. The GroEL-GroES system forms a nano-cage that allows encapsulation of the non-native substrate proteins and provides a physical environment optimized to promote and accelerate protein folding. GroES binds to the apical surface of the GroEL ring, thereby capping the opening of the GroEL channel. The chain is Co-chaperonin GroES from Streptococcus oralis.